The sequence spans 816 residues: Acyl-homoserine lactone acylase QuiP (816 aa).

Positions 1 to 33 (MASPALSHFLPRFGVAAAVAGVLSLTGCQTWNA) are cleaved as a signal peptide. S262 acts as the Nucleophile in catalysis.

This sequence belongs to the peptidase S45 family. Heterodimer of an alpha subunit and a beta subunit processed from the same precursor.

Its subcellular location is the periplasm. It carries out the reaction an N-acyl-L-homoserine lactone + H2O = L-homoserine lactone + a carboxylate. Catalyzes the deacylation of acyl-homoserine lactone (AHL or acyl-HSL), releasing homoserine lactone (HSL) and the corresponding fatty acid. Possesses a specificity for the degradation of long-chain acyl-HSLs (side chains of seven or more carbons in length). The chain is Acyl-homoserine lactone acylase QuiP (quiP) from Pseudomonas fluorescens (strain Pf0-1).